The sequence spans 276 residues: NAD-capped RNA hydrolase NudC (276 aa).

Substrate is bound at residue Arg82. Positions 112 and 115 each coordinate Zn(2+). Glu125 provides a ligand contact to substrate. Cys130 and Cys133 together coordinate Zn(2+). Residue Tyr138 coordinates substrate. The Nudix hydrolase domain maps to 139–262; sequence PRLSPSMIVL…SIARYLIELY (124 aa). Residues Ala172, Glu188, and Glu192 each contribute to the a divalent metal cation site. The Nudix box motif lies at 173-194; that stretch reads GYVEPGESVEQCVAREVREEVG. 206–213 is a substrate binding site; the sequence is QGWPFPHS. Residue Glu233 coordinates a divalent metal cation. Ala255 is a binding site for substrate.

It belongs to the Nudix hydrolase family. NudC subfamily. Homodimer. It depends on Mg(2+) as a cofactor. Mn(2+) is required as a cofactor. Zn(2+) serves as cofactor.

The catalysed reaction is a 5'-end NAD(+)-phospho-ribonucleoside in mRNA + H2O = a 5'-end phospho-adenosine-phospho-ribonucleoside in mRNA + beta-nicotinamide D-ribonucleotide + 2 H(+). The enzyme catalyses NAD(+) + H2O = beta-nicotinamide D-ribonucleotide + AMP + 2 H(+). It catalyses the reaction NADH + H2O = reduced beta-nicotinamide D-ribonucleotide + AMP + 2 H(+). Functionally, mRNA decapping enzyme that specifically removes the nicotinamide adenine dinucleotide (NAD) cap from a subset of mRNAs by hydrolyzing the diphosphate linkage to produce nicotinamide mononucleotide (NMN) and 5' monophosphate mRNA. The NAD-cap is present at the 5'-end of some mRNAs and stabilizes RNA against 5'-processing. Has preference for mRNAs with a 5'-end purine. Catalyzes the hydrolysis of a broad range of dinucleotide pyrophosphates. The chain is NAD-capped RNA hydrolase NudC from Stutzerimonas stutzeri (strain A1501) (Pseudomonas stutzeri).